Here is a 570-residue protein sequence, read N- to C-terminus: Developmental and secondary metabolism regulator veA (570 aa).

Disordered stretches follow at residues 1–24 (MATR…ISRE), 39–60 (ERAR…VDPP), 266–491 (DMYA…LGSG), and 504–541 (KRSH…DYGR). The 207-residue stretch at 25–231 (GKKITYKLSV…AEQGCRVRIR (207 aa)) folds into the Velvet domain. A Nuclear localization signal motif is present at residues 39–44 (ERARAC). A compositionally biased stretch (polar residues) spans 278–287 (STSISTTADT). Low complexity predominate over residues 315 to 335 (SMPAASAAPAPAPVHSPATSA). Polar residues-rich tracts occupy residues 336-354 (QTSS…SQYP), 363-395 (QSAT…TSSG), and 427-445 (NMQT…YPTL). A PEST region spans residues 454 to 493 (PTPANHVTSLPPLKVLSGEYSHPSQPNAQSPHHDLGSGKR). Over residues 505-526 (RSHEETFGSDERPLHNGMRPDM) the composition is skewed to basic and acidic residues.

It belongs to the velvet family. VeA subfamily. As to quaternary structure, component of the heterotrimeric velvet complex composed of laeA, veA and velB; VeA acting as a bridging protein between laeA and velB.

It is found in the nucleus. It localises to the cytoplasm. Functionally, component of the velvet transcription factor complex that controls sexual/asexual developmental ratio in response to light, promoting sexual development in the darkness while stimulating asexual sporulation under illumination. The velvet complex hat acts as a global regulator for secondary metabolite gene expression. Controls the expression of hundreds of genes, including those comprising more than a dozen known secondary metabolite gene clusters. Controls the expression of the gliotoxin gene cluster. Controls the expression of the fumagillin, fumitremorgin G, fumigaclavine C and glionitrin gene clusters. The regulation of the fumagillin gene cluster and fumagillin production is performed through direct control of the expression of fumR. Negatively regulates conidiation. Required for normal protease activity. In Aspergillus fumigatus (strain ATCC MYA-4609 / CBS 101355 / FGSC A1100 / Af293) (Neosartorya fumigata), this protein is Developmental and secondary metabolism regulator veA.